The chain runs to 467 residues: Glutamate--tRNA ligase (467 aa).

A 'HIGH' region motif is present at residues 9–19 (PSPTGYLHIGG). The 'KMSKS' region signature appears at 237–241 (KLSKR). Residue Lys240 participates in ATP binding.

It belongs to the class-I aminoacyl-tRNA synthetase family. Glutamate--tRNA ligase type 1 subfamily. As to quaternary structure, monomer.

The protein resides in the cytoplasm. It carries out the reaction tRNA(Glu) + L-glutamate + ATP = L-glutamyl-tRNA(Glu) + AMP + diphosphate. Its function is as follows. Catalyzes the attachment of glutamate to tRNA(Glu) in a two-step reaction: glutamate is first activated by ATP to form Glu-AMP and then transferred to the acceptor end of tRNA(Glu). The sequence is that of Glutamate--tRNA ligase from Xylella fastidiosa (strain M23).